A 332-amino-acid chain; its full sequence is Nuclear hormone receptor family member nhr-9 (332 aa).

The nuclear receptor DNA-binding region spans glutamate 11–tyrosine 85. 2 NR C4-type zinc fingers span residues cysteine 14 to cysteine 34 and cysteine 50 to cysteine 73. The NR LBD domain occupies aspartate 101–alanine 332.

Belongs to the nuclear hormone receptor family.

It localises to the nucleus. Functionally, orphan nuclear receptor. This is Nuclear hormone receptor family member nhr-9 (nhr-9) from Caenorhabditis elegans.